A 407-amino-acid chain; its full sequence is MFRNYNWFDAKEPISYESEIYAKGLKFQRPQITVDGRHWEQLAVERMTKDAAGYVYGCAGKRETYDKNMESFKKWSIIPNRLIKSGFPDLSTTVFGQKYPFPIALAPVGVQKIFNPEGESGSCAAATREHIPYIISTASATSFEDIEKASGPGERWYQLYWPSNDHQDITISLLNRAKKTGCRVLIVTLDTFILGWRPSDMDNGYDPFLNPDSIGVEHGFSDPVFRKQFKEKHGVEVEENMLEAAKEFAGIVFPGISHDWEDLKFLRKHWDGPIVLKGIMNVPDAKKAVEYGMQGIVVSNHGGRQQDGGVASLTMLPKIVDAVGDKLDVLFDSGVRSGADIAKALALGAKMVLIGRPYVYGLALEGSSGVSHVIRCLLGDLELTLHLSGIVSVKPKDLNRDVLYKEE.

Residues 28-406 enclose the FMN hydroxy acid dehydrogenase domain; sequence QRPQITVDGR…DLNRDVLYKE (379 aa). Tyr-54 is an a 2-oxocarboxylate binding site. FMN contacts are provided by Ser-136 and Gln-158. A 2-oxocarboxylate is bound at residue Tyr-160. Thr-188 contacts FMN. Arg-197 is a binding site for a 2-oxocarboxylate. FMN is bound at residue Lys-277. Catalysis depends on His-301, which acts as the Proton acceptor. Arg-304 contacts a 2-oxocarboxylate. FMN-binding positions include 332–336 and 355–356; these read DSGVR and GR.

Belongs to the FMN-dependent alpha-hydroxy acid dehydrogenase family. FMN is required as a cofactor.

It is found in the cytoplasm. Its subcellular location is the nucleus. In Schizosaccharomyces pombe (strain 972 / ATCC 24843) (Fission yeast), this protein is FMN-dependent alpha-hydroxy acid dehydrogenase PB1A11.03.